The sequence spans 811 residues: Endothelin-converting enzyme 2 (811 aa).

Residues 1–106 lie on the Cytoplasmic side of the membrane; the sequence is MNVALQELGA…QLLGSRTQLE (106 aa). Residues 22–64 form a disordered region; that stretch reads LRDEDAPETPVEGGASPDAMEVGKGASPFSPGPSPGMTPGTPR. Residues 107 to 127 traverse the membrane as a helical; Signal-anchor for type II membrane protein segment; it reads LVLAGASLLLAALLLGCLVAL. At 128-811 the chain is on the lumenal side; the sequence is GVQYHRDPSH…MNPGQLCEVW (684 aa). The Peptidase M13 domain occupies 139 to 811; that stretch reads TCLTEACIRV…MNPGQLCEVW (673 aa). 5 cysteine pairs are disulfide-bonded: Cys140-Cys145, Cys163-Cys796, Cys171-Cys756, Cys227-Cys476, and Cys685-Cys808. Residues Asn207, Asn211, Asn252, Asn312, Asn357, Asn424, and Asn580 are each glycosylated (N-linked (GlcNAc...) asparagine). Residue His648 participates in Zn(2+) binding. Glu649 is a catalytic residue. His652 contacts Zn(2+). N-linked (GlcNAc...) asparagine glycosylation is found at Asn673 and Asn681. Glu708 contributes to the Zn(2+) binding site. The active-site Proton donor is Asp712.

The protein belongs to the peptidase M13 family. Zn(2+) is required as a cofactor.

Its subcellular location is the golgi apparatus membrane. It is found in the cytoplasmic vesicle. It localises to the secretory vesicle membrane. The catalysed reaction is Hydrolysis of the 21-Trp-|-Val-22 bond in big endothelin to form endothelin 1.. In terms of biological role, converts big endothelin-1 to endothelin-1. Also involved in the processing of various neuroendocrine peptides, including neurotensin, angiotensin I, substance P, proenkephalin-derived peptides, and prodynorphin-derived peptides. May play a role in amyloid-beta processing. The protein is Endothelin-converting enzyme 2 of Homo sapiens (Human).